A 490-amino-acid polypeptide reads, in one-letter code: Pyridine nucleotide-disulfide oxidoreductase domain-containing protein 1 (490 aa).

This sequence belongs to the class-I pyridine nucleotide-disulfide oxidoreductase family. PYROXD1 subfamily. FAD is required as a cofactor.

The protein localises to the nucleus. It localises to the cytoplasm. The protein resides in the myofibril. Its subcellular location is the sarcomere. In terms of biological role, probable FAD-dependent oxidoreductase; involved in the cellular oxidative stress response. Required for normal sarcomere structure and muscle fiber integrity. In Danio rerio (Zebrafish), this protein is Pyridine nucleotide-disulfide oxidoreductase domain-containing protein 1 (pyroxd1).